Consider the following 152-residue polypeptide: SsrA-binding protein (152 aa).

This sequence belongs to the SmpB family.

The protein localises to the cytoplasm. Required for rescue of stalled ribosomes mediated by trans-translation. Binds to transfer-messenger RNA (tmRNA), required for stable association of tmRNA with ribosomes. tmRNA and SmpB together mimic tRNA shape, replacing the anticodon stem-loop with SmpB. tmRNA is encoded by the ssrA gene; the 2 termini fold to resemble tRNA(Ala) and it encodes a 'tag peptide', a short internal open reading frame. During trans-translation Ala-aminoacylated tmRNA acts like a tRNA, entering the A-site of stalled ribosomes, displacing the stalled mRNA. The ribosome then switches to translate the ORF on the tmRNA; the nascent peptide is terminated with the 'tag peptide' encoded by the tmRNA and targeted for degradation. The ribosome is freed to recommence translation, which seems to be the essential function of trans-translation. The polypeptide is SsrA-binding protein (Persephonella marina (strain DSM 14350 / EX-H1)).